The following is an 821-amino-acid chain: Phenylalanine--tRNA ligase beta subunit (821 aa).

In terms of domain architecture, tRNA-binding spans serine 39–glycine 149. The B5 domain maps to leucine 414–leucine 507. Mg(2+) is bound by residues aspartate 485, aspartate 491, glutamate 494, and glutamate 495. Positions proline 727–arginine 820 constitute an FDX-ACB domain.

The protein belongs to the phenylalanyl-tRNA synthetase beta subunit family. Type 1 subfamily. In terms of assembly, tetramer of two alpha and two beta subunits. Mg(2+) serves as cofactor.

It localises to the cytoplasm. The catalysed reaction is tRNA(Phe) + L-phenylalanine + ATP = L-phenylalanyl-tRNA(Phe) + AMP + diphosphate + H(+). This Prochlorococcus marinus subsp. pastoris (strain CCMP1986 / NIES-2087 / MED4) protein is Phenylalanine--tRNA ligase beta subunit.